The primary structure comprises 491 residues: MTDLTSLTLAEARKGLASKTFTSLELTDAHLKAMEEARALNAFVMETPDQARAMAREADARIGKGEAGPLAGIPLGIKDLFATKDVRTTACSKILGNFVPTYESTVTSQLWRDGAVMLGKLNNDEFAMGSSNETSCFGPVGNPWRREGSNTTLVPGGSSGGSASAVAALLCMGATATDTGGSIRQPAAFTATVGIKPTYGRCSRWGIVAFASSLDQAGPIARSTRDAAILLRSMAGHDPKDTTSVDIPVPDYEAAIGRSVKGMKIGIPREYRLDGMPAEIEKLWSDGADWLKAAGAELVEVSLPHTKYALPAYYIVAPAEASSNLARYDGVRYGLRVSGKSIGELYENTRAEGFGPEVRRRVMIGTYVLSAGYYDAYYIRAQKVRTLIKRDFEDCFAKGVNAILTPATPSAAFGIGEKGGADPVEMYLNDIFTVTVNMAGLPGIAVPAGKDSQGLPLGLQLIGRPFDEETLFSLGEVIEQAAGRFTPVRWW.

Catalysis depends on charge relay system residues Lys78 and Ser158. The Acyl-ester intermediate role is filled by Ser182.

It belongs to the amidase family. GatA subfamily. In terms of assembly, heterotrimer of A, B and C subunits.

It carries out the reaction L-glutamyl-tRNA(Gln) + L-glutamine + ATP + H2O = L-glutaminyl-tRNA(Gln) + L-glutamate + ADP + phosphate + H(+). Allows the formation of correctly charged Gln-tRNA(Gln) through the transamidation of misacylated Glu-tRNA(Gln) in organisms which lack glutaminyl-tRNA synthetase. The reaction takes place in the presence of glutamine and ATP through an activated gamma-phospho-Glu-tRNA(Gln). This is Glutamyl-tRNA(Gln) amidotransferase subunit A from Bradyrhizobium sp. (strain BTAi1 / ATCC BAA-1182).